A 287-amino-acid polypeptide reads, in one-letter code: MKSRLFIISQYLLPHHLLSRLAGCVAECRARWFKNAFTAWFAKRYQVNMSEALVEDLSAYEHFNAFFTRALKPGARPLDETPGAILCPADGAVSQLGPIEHGRIFQAKGHGYSALELLGGDPALAAPFMGGEFATIYLSPKDYHRVHMPLAGTLREMVYVPGRLFSVNQTTAENVPELFARNERVVCLFDTERGPMAVVLVGAMIVASIETVWAGLVTPPKRELKTFRYDEASRAPIHLEKGAELGRFKLGSTAIVLFGPEQVKWAESLGAGSAVRMGEMLAVPAQA.

Residues Asp-90, His-147, and Ser-252 each act as charge relay system; for autoendoproteolytic cleavage activity in the active site. Ser-252 (schiff-base intermediate with substrate; via pyruvic acid; for decarboxylase activity) is an active-site residue. A Pyruvic acid (Ser); by autocatalysis modification is found at Ser-252.

The protein belongs to the phosphatidylserine decarboxylase family. PSD-B subfamily. Prokaryotic type I sub-subfamily. In terms of assembly, heterodimer of a large membrane-associated beta subunit and a small pyruvoyl-containing alpha subunit. Requires pyruvate as cofactor. Post-translationally, is synthesized initially as an inactive proenzyme. Formation of the active enzyme involves a self-maturation process in which the active site pyruvoyl group is generated from an internal serine residue via an autocatalytic post-translational modification. Two non-identical subunits are generated from the proenzyme in this reaction, and the pyruvate is formed at the N-terminus of the alpha chain, which is derived from the carboxyl end of the proenzyme. The autoendoproteolytic cleavage occurs by a canonical serine protease mechanism, in which the side chain hydroxyl group of the serine supplies its oxygen atom to form the C-terminus of the beta chain, while the remainder of the serine residue undergoes an oxidative deamination to produce ammonia and the pyruvoyl prosthetic group on the alpha chain. During this reaction, the Ser that is part of the protease active site of the proenzyme becomes the pyruvoyl prosthetic group, which constitutes an essential element of the active site of the mature decarboxylase.

It is found in the cell membrane. The catalysed reaction is a 1,2-diacyl-sn-glycero-3-phospho-L-serine + H(+) = a 1,2-diacyl-sn-glycero-3-phosphoethanolamine + CO2. Its pathway is phospholipid metabolism; phosphatidylethanolamine biosynthesis; phosphatidylethanolamine from CDP-diacylglycerol: step 2/2. In terms of biological role, catalyzes the formation of phosphatidylethanolamine (PtdEtn) from phosphatidylserine (PtdSer). This Pseudomonas entomophila (strain L48) protein is Phosphatidylserine decarboxylase proenzyme.